A 127-amino-acid chain; its full sequence is Aspartate 1-decarboxylase (127 aa).

Ser-25 (schiff-base intermediate with substrate; via pyruvic acid) is an active-site residue. At Ser-25 the chain carries Pyruvic acid (Ser). Position 57 (Thr-57) interacts with substrate. Tyr-58 functions as the Proton donor in the catalytic mechanism. Position 73–75 (73–75) interacts with substrate; it reads GAA.

The protein belongs to the PanD family. As to quaternary structure, heterooctamer of four alpha and four beta subunits. Requires pyruvate as cofactor. Post-translationally, is synthesized initially as an inactive proenzyme, which is activated by self-cleavage at a specific serine bond to produce a beta-subunit with a hydroxyl group at its C-terminus and an alpha-subunit with a pyruvoyl group at its N-terminus.

Its subcellular location is the cytoplasm. It carries out the reaction L-aspartate + H(+) = beta-alanine + CO2. It participates in cofactor biosynthesis; (R)-pantothenate biosynthesis; beta-alanine from L-aspartate: step 1/1. Functionally, catalyzes the pyruvoyl-dependent decarboxylation of aspartate to produce beta-alanine. In Desulfitobacterium hafniense (strain DSM 10664 / DCB-2), this protein is Aspartate 1-decarboxylase.